The sequence spans 347 residues: GMP reductase (347 aa).

A108 to A131 is an NADP(+) binding site. Positions 181 and 183 each coordinate K(+). C186 acts as the Thioimidate intermediate in catalysis. I216–V239 contacts NADP(+).

The protein belongs to the IMPDH/GMPR family. GuaC type 1 subfamily. Homotetramer.

The catalysed reaction is IMP + NH4(+) + NADP(+) = GMP + NADPH + 2 H(+). In terms of biological role, catalyzes the irreversible NADPH-dependent deamination of GMP to IMP. It functions in the conversion of nucleobase, nucleoside and nucleotide derivatives of G to A nucleotides, and in maintaining the intracellular balance of A and G nucleotides. The protein is GMP reductase of Aliivibrio salmonicida (strain LFI1238) (Vibrio salmonicida (strain LFI1238)).